A 106-amino-acid chain; its full sequence is Nucleoid-associated protein Noc_2594 (106 aa).

Disordered regions lie at residues 1–20 (MKGG…SNME) and 85–106 (QSKE…KLPL). A compositionally biased stretch (polar residues) spans 10-20 (KQAQQLQSNME).

The protein belongs to the YbaB/EbfC family. In terms of assembly, homodimer.

The protein resides in the cytoplasm. The protein localises to the nucleoid. Binds to DNA and alters its conformation. May be involved in regulation of gene expression, nucleoid organization and DNA protection. This is Nucleoid-associated protein Noc_2594 from Nitrosococcus oceani (strain ATCC 19707 / BCRC 17464 / JCM 30415 / NCIMB 11848 / C-107).